The following is an 81-amino-acid chain: Acyl carrier protein (81 aa).

One can recognise a Carrier domain in the interval 2–80; sequence ASKEEILAGL…DAVDFIDGAQ (79 aa). Serine 40 is modified (O-(pantetheine 4'-phosphoryl)serine).

Belongs to the acyl carrier protein (ACP) family. In terms of processing, 4'-phosphopantetheine is transferred from CoA to a specific serine of apo-ACP by AcpS. This modification is essential for activity because fatty acids are bound in thioester linkage to the sulfhydryl of the prosthetic group.

The protein localises to the cytoplasm. It functions in the pathway lipid metabolism; fatty acid biosynthesis. Carrier of the growing fatty acid chain in fatty acid biosynthesis. The sequence is that of Acyl carrier protein from Micrococcus luteus (strain ATCC 4698 / DSM 20030 / JCM 1464 / CCM 169 / CCUG 5858 / IAM 1056 / NBRC 3333 / NCIMB 9278 / NCTC 2665 / VKM Ac-2230) (Micrococcus lysodeikticus).